Here is a 211-residue protein sequence, read N- to C-terminus: Arginine exporter protein ArgO (211 aa).

The next 6 helical transmembrane spans lie at 1–21, 37–57, 68–88, 111–131, 147–167, and 179–199; these read MISY…PLGP, LMIA…GIFG, LLAL…FGAL, IIAT…DTFV, WFAL…ALLA, and AQRI…FQLA.

Belongs to the LysE/ArgO transporter (TC 2.A.75) family.

Its subcellular location is the cell inner membrane. The catalysed reaction is L-arginine(in) = L-arginine(out). Its function is as follows. Involved in the export of arginine. Important to control the intracellular level of arginine and the correct balance between arginine and lysine. The chain is Arginine exporter protein ArgO from Salmonella paratyphi C (strain RKS4594).